Consider the following 397-residue polypeptide: 3-ketoacyl-CoA thiolase, mitochondrial (397 aa).

Residues 1–16 (MALLRGVFIVAAKRTP) constitute a mitochondrion; not cleaved transit peptide. Residue K25 is modified to N6-acetyllysine; alternate. Residue K25 is modified to N6-succinyllysine; alternate. The residue at position 28 (S28) is a Phosphoserine. At K45 the chain carries N6-succinyllysine. C92 serves as the catalytic Acyl-thioester intermediate. At T119 the chain carries Phosphothreonine. Position 121 is a phosphoserine (S121). Y127 carries the post-translational modification Phosphotyrosine. At T136 the chain carries Phosphothreonine. N6-acetyllysine; alternate occurs at positions 137, 143, 158, 171, 191, and 209. 6 positions are modified to N6-succinyllysine; alternate: K137, K143, K158, K171, K191, and K209. Residues K211, K212, and K214 each carry the N6-succinyllysine modification. CoA is bound by residues R224 and T227. At K234 the chain carries N6-acetyllysine; alternate. N6-succinyllysine; alternate is present on K234. N6-succinyllysine is present on K240. K241 carries the post-translational modification N6-acetyllysine. S251 is a CoA binding site. Residues K269 and K270 each carry the N6-acetyllysine modification. An N6-acetyllysine; alternate modification is found at K305. The residue at position 305 (K305) is an N6-succinyllysine; alternate. A Phosphoserine modification is found at S310. Position 312 is an N6-acetyllysine; alternate (K312). K312 carries the post-translational modification N6-succinyllysine; alternate. Position 340 is an N6-acetyllysine (K340). S344 carries the phosphoserine modification. K375 is modified (N6-acetyllysine). C382 serves as the catalytic Proton donor/acceptor.

This sequence belongs to the thiolase-like superfamily. Thiolase family. As to quaternary structure, homotetramer. Interacts with BNIP3.

The protein localises to the mitochondrion. It catalyses the reaction an acyl-CoA + acetyl-CoA = a 3-oxoacyl-CoA + CoA. The catalysed reaction is 2 acetyl-CoA = acetoacetyl-CoA + CoA. The enzyme catalyses acetyl-CoA + H2O = acetate + CoA + H(+). It carries out the reaction propanoyl-CoA + H2O = propanoate + CoA + H(+). It catalyses the reaction butanoyl-CoA + H2O = butanoate + CoA + H(+). The catalysed reaction is hexanoyl-CoA + H2O = hexanoate + CoA + H(+). The enzyme catalyses octanoyl-CoA + H2O = octanoate + CoA + H(+). It carries out the reaction decanoyl-CoA + H2O = decanoate + CoA + H(+). It catalyses the reaction dodecanoyl-CoA + H2O = dodecanoate + CoA + H(+). The catalysed reaction is tetradecanoyl-CoA + H2O = tetradecanoate + CoA + H(+). The enzyme catalyses hexadecanoyl-CoA + H2O = hexadecanoate + CoA + H(+). The protein operates within lipid metabolism; fatty acid beta-oxidation. In terms of biological role, in the production of energy from fats, this is one of the enzymes that catalyzes the last step of the mitochondrial beta-oxidation pathway, an aerobic process breaking down fatty acids into acetyl-CoA. Using free coenzyme A/CoA, catalyzes the thiolytic cleavage of medium- to long-chain unbranched 3-oxoacyl-CoAs into acetyl-CoA and a fatty acyl-CoA shortened by two carbon atoms. Also catalyzes the condensation of two acetyl-CoA molecules into acetoacetyl-CoA and could be involved in the production of ketone bodies. Also displays hydrolase activity on various fatty acyl-CoAs. Thereby, could be responsible for the production of acetate in a side reaction to beta-oxidation. Abolishes BNIP3-mediated apoptosis and mitochondrial damage. In Mus musculus (Mouse), this protein is 3-ketoacyl-CoA thiolase, mitochondrial (Acaa2).